A 176-amino-acid polypeptide reads, in one-letter code: Large ribosomal subunit protein uL10 (176 aa).

Belongs to the universal ribosomal protein uL10 family. Part of the ribosomal stalk of the 50S ribosomal subunit. The N-terminus interacts with L11 and the large rRNA to form the base of the stalk. The C-terminus forms an elongated spine to which L12 dimers bind in a sequential fashion forming a multimeric L10(L12)X complex.

In terms of biological role, forms part of the ribosomal stalk, playing a central role in the interaction of the ribosome with GTP-bound translation factors. This Coprothermobacter proteolyticus (strain ATCC 35245 / DSM 5265 / OCM 4 / BT) protein is Large ribosomal subunit protein uL10.